The primary structure comprises 488 residues: Stress activated transcription factor atfs-1 (488 aa).

Residues 1 to 23 (MFSRVGRLTTFGAQAVSNCPFRR) constitute a mitochondrion transit peptide. The interval 138-191 (SWQNGSSVGHPHGHQQQQQTCQQPPTHSSTTETMHDFSNFGDNMGSPLFQSPSK) is disordered. A compositionally biased stretch (low complexity) spans 142-168 (GSSVGHPHGHQQQQQTCQQPPTHSSTT). A Glycyl lysine isopeptide (Lys-Gly) (interchain with G-Cter in smo-1) cross-link involves residue Lys342. Positions 353–400 (QRDDDDEDYIPASEARRTSSRLNRKSATPTYLRRRDSERSWTPASDDY) are disordered. A bZIP domain is found at 420–483 (DEETDRRRML…NSMKKELRKM (64 aa)). The basic motif stretch occupies residues 425–460 (RRRMLNRIAAVRYREKKRAEKKGRKMEFQEVADRNR). Residues 436–441 (RYREKK) carry the Nuclear localization signal motif. The segment at 462 to 469 (LLQKERQL) is leucine-zipper.

It belongs to the bZIP family. May be desumoylated by ulp-4. In terms of tissue distribution, ubiquitously expressed.

It is found in the mitochondrion matrix. Its subcellular location is the cytoplasm. The protein localises to the nucleus. Acts as a transcription factor during mitochondrial stress by activating the mitochondrial unfolded protein response (mtUPR). Induces nuclear and mitochondrial gene transcription, including genes coding for mitochondrial chaperones and proteins involved in glycolysis, amino acid catabolism and innate immunity. Following mitochondrial stress, restores mitochondrial respiratory capacity by limiting the transcription of oxidative phosphorylation (OXPHOS) machinery genes and by promoting the assembly of OXPHOS complexes via the up-regulation of chaperone and assembly factor genes. Component of a feedback loop involving atfs-1, atgl-1 and hlh-11. Acts together with flp-7 to negatively regulate the expression of the transcription regulator hlh-11, to promote expression of atgl-1, and thus atgl-1-dependent fat oxidation in response to mitochondrial stress. In addition, functions with hlh-11 to maintain lifespan. Promotes mtDNA maintenance and propagation of deleterious mtDNA. In Caenorhabditis elegans, this protein is Stress activated transcription factor atfs-1.